The following is a 348-amino-acid chain: Sorbitol dehydrogenase (348 aa).

Zn(2+) contacts are provided by Cys40, His65, and Glu66. Residues Ile179, Asp199, Arg204, 269–271 (VGI), and 293–295 (SFR) each bind NAD(+). Arg295 contacts substrate.

This sequence belongs to the zinc-containing alcohol dehydrogenase family. In terms of assembly, homotetramer. Requires Zn(2+) as cofactor.

The catalysed reaction is xylitol + NAD(+) = D-xylulose + NADH + H(+). It carries out the reaction L-iditol + NAD(+) = keto-L-sorbose + NADH + H(+). It catalyses the reaction keto-D-fructose + NADH + H(+) = D-sorbitol + NAD(+). Functionally, polyol dehydrogenase that catalyzes the reversible NAD(+)-dependent oxidation of various sugar alcohols. Is active with xylitol, L-iditol and D-sorbitol (D-glucitol) as substrates, leading to the C2-oxidized products D-xylulose, L-sorbose and D-fructose, respectively. Is a key enzyme in the polyol pathway that interconverts glucose and fructose via sorbitol, which constitutes an important alternate route for glucose metabolism. In Bombyx mori (Silk moth), this protein is Sorbitol dehydrogenase (SDH).